We begin with the raw amino-acid sequence, 438 residues long: ATP phosphoribosyltransferase regulatory subunit (438 aa).

Belongs to the class-II aminoacyl-tRNA synthetase family. HisZ subfamily. Heteromultimer composed of HisG and HisZ subunits.

The protein resides in the cytoplasm. It participates in amino-acid biosynthesis; L-histidine biosynthesis; L-histidine from 5-phospho-alpha-D-ribose 1-diphosphate: step 1/9. In terms of biological role, required for the first step of histidine biosynthesis. May allow the feedback regulation of ATP phosphoribosyltransferase activity by histidine. The polypeptide is ATP phosphoribosyltransferase regulatory subunit (Geobacter sulfurreducens (strain ATCC 51573 / DSM 12127 / PCA)).